We begin with the raw amino-acid sequence, 40 residues long: Large ribosomal subunit protein bL36B (40 aa).

The protein belongs to the bacterial ribosomal protein bL36 family.

This is Large ribosomal subunit protein bL36B from Kocuria rhizophila (strain ATCC 9341 / DSM 348 / NBRC 103217 / DC2201).